A 406-amino-acid chain; its full sequence is Imidazolonepropionase (406 aa).

The Fe(3+) site is built by His74 and His76. Zn(2+)-binding residues include His74 and His76. Residues Arg83, Tyr146, and His179 each contribute to the 4-imidazolone-5-propanoate site. An N-formimidoyl-L-glutamate-binding site is contributed by Tyr146. Position 240 (His240) interacts with Fe(3+). Position 240 (His240) interacts with Zn(2+). 4-imidazolone-5-propanoate is bound at residue Glu243. Asp314 contributes to the Fe(3+) binding site. Asp314 is a Zn(2+) binding site. N-formimidoyl-L-glutamate contacts are provided by Asn316 and Gly318. Residue Ser319 coordinates 4-imidazolone-5-propanoate.

The protein belongs to the metallo-dependent hydrolases superfamily. HutI family. Zn(2+) serves as cofactor. It depends on Fe(3+) as a cofactor.

It localises to the cytoplasm. The enzyme catalyses 4-imidazolone-5-propanoate + H2O = N-formimidoyl-L-glutamate. The protein operates within amino-acid degradation; L-histidine degradation into L-glutamate; N-formimidoyl-L-glutamate from L-histidine: step 3/3. Catalyzes the hydrolytic cleavage of the carbon-nitrogen bond in imidazolone-5-propanoate to yield N-formimidoyl-L-glutamate. It is the third step in the universal histidine degradation pathway. The chain is Imidazolonepropionase from Kosmotoga olearia (strain ATCC BAA-1733 / DSM 21960 / TBF 19.5.1).